The sequence spans 320 residues: MQTRNTLSWIKEEITRSISVSLMIYIITWASISNAYPIFAQQGYENPREATGRIVCANCHLANKPVDIEVPQAVLPDTVFEAVVRIPYDMQLKQVLANGKKGGLNVGAVLILPEGFELAPPDRISPEMKEKIGNLSFQNYRPTQKKILVIGPVPGQKYSEITFPILSPDPATNKDVHFLKYPIYVGGNRGRGQIYPDGRKSNNTVYNATAAGIVSKILRKEKGGYEITIVDASDGRQVVDIIPPGPELLVSEGESIKLDQPLTSNPNVGGFGQGDAEIVLQDPSRVQGLLFFLASVVLAQIFLVLKKKQFEKVQLSEMNF.

The N-terminal stretch at Met1–Ala35 is a signal peptide. Positions 36, 56, 59, and 60 each coordinate heme. A helical membrane pass occupies residues Val286–Lys306.

The protein belongs to the cytochrome f family. In terms of assembly, the 4 large subunits of the cytochrome b6-f complex are cytochrome b6, subunit IV (17 kDa polypeptide, petD), cytochrome f and the Rieske protein, while the 4 small subunits are PetG, PetL, PetM and PetN. The complex functions as a dimer. Heme is required as a cofactor.

Its subcellular location is the plastid. The protein resides in the chloroplast thylakoid membrane. In terms of biological role, component of the cytochrome b6-f complex, which mediates electron transfer between photosystem II (PSII) and photosystem I (PSI), cyclic electron flow around PSI, and state transitions. The chain is Cytochrome f from Carica papaya (Papaya).